The sequence spans 452 residues: Phosphatidylinositol N-acetylglucosaminyltransferase GPI3 subunit (452 aa).

The helical transmembrane segment at 407–427 (LYLLCGIVEYMLFFLLEWLYP) threads the bilayer.

Belongs to the glycosyltransferase group 1 family. Component of the phosphatidylinositol N-acetylglucosaminyltransferase complex composed of at least GPI1, GPI2, GPI3, GPI15, GPI19 and ERI1.

It localises to the endoplasmic reticulum membrane. The catalysed reaction is a 1,2-diacyl-sn-glycero-3-phospho-(1D-myo-inositol) + UDP-N-acetyl-alpha-D-glucosamine = a 6-(N-acetyl-alpha-D-glucosaminyl)-1-(1,2-diacyl-sn-glycero-3-phospho)-1D-myo-inositol + UDP + H(+). It participates in glycolipid biosynthesis; glycosylphosphatidylinositol-anchor biosynthesis. With respect to regulation, inhibited by Ras, probably via the interaction between RAS2 and ERI1. Its function is as follows. Catalytic subunit in the complex catalyzing the transfer of N-acetylglucosamine from UDP-N-acetylglucosamine to phosphatidylinositol, the first step of GPI biosynthesis. This Saccharomyces cerevisiae (strain YJM789) (Baker's yeast) protein is Phosphatidylinositol N-acetylglucosaminyltransferase GPI3 subunit (SPT14).